The primary structure comprises 490 residues: ATP synthase subunit beta, plastid (490 aa).

An ATP-binding site is contributed by Gly-170–Thr-177.

This sequence belongs to the ATPase alpha/beta chains family. In terms of assembly, F-type ATPases have 2 components, CF(1) - the catalytic core - and CF(0) - the membrane proton channel. CF(1) has five subunits: alpha(3), beta(3), gamma(1), delta(1), epsilon(1). CF(0) has four main subunits: a(1), b(1), b'(1) and c(9-12).

It is found in the plastid membrane. It carries out the reaction ATP + H2O + 4 H(+)(in) = ADP + phosphate + 5 H(+)(out). Produces ATP from ADP in the presence of a proton gradient across the membrane. The catalytic sites are hosted primarily by the beta subunits. This Cuscuta exaltata (Tall dodder) protein is ATP synthase subunit beta, plastid.